Reading from the N-terminus, the 58-residue chain is uncharacterized protein (58 aa).

2 consecutive transmembrane segments (helical) span residues I5–E25 and W32–I52.

It is found in the cell membrane. This is an uncharacterized protein from Methanocaldococcus jannaschii (strain ATCC 43067 / DSM 2661 / JAL-1 / JCM 10045 / NBRC 100440) (Methanococcus jannaschii).